The following is a 360-amino-acid chain: UDP-N-acetylglucosamine--N-acetylmuramyl-(pentapeptide) pyrophosphoryl-undecaprenol N-acetylglucosamine transferase (360 aa).

UDP-N-acetyl-alpha-D-glucosamine contacts are provided by residues 14–16 (TGG), N131, R167, S195, I249, and Q294.

It belongs to the glycosyltransferase 28 family. MurG subfamily.

It localises to the cell inner membrane. It catalyses the reaction di-trans,octa-cis-undecaprenyl diphospho-N-acetyl-alpha-D-muramoyl-L-alanyl-D-glutamyl-meso-2,6-diaminopimeloyl-D-alanyl-D-alanine + UDP-N-acetyl-alpha-D-glucosamine = di-trans,octa-cis-undecaprenyl diphospho-[N-acetyl-alpha-D-glucosaminyl-(1-&gt;4)]-N-acetyl-alpha-D-muramoyl-L-alanyl-D-glutamyl-meso-2,6-diaminopimeloyl-D-alanyl-D-alanine + UDP + H(+). It participates in cell wall biogenesis; peptidoglycan biosynthesis. Its function is as follows. Cell wall formation. Catalyzes the transfer of a GlcNAc subunit on undecaprenyl-pyrophosphoryl-MurNAc-pentapeptide (lipid intermediate I) to form undecaprenyl-pyrophosphoryl-MurNAc-(pentapeptide)GlcNAc (lipid intermediate II). This is UDP-N-acetylglucosamine--N-acetylmuramyl-(pentapeptide) pyrophosphoryl-undecaprenol N-acetylglucosamine transferase from Polaromonas naphthalenivorans (strain CJ2).